The following is a 284-amino-acid chain: MVLMIVSGRSGSGKSVALRALEDMGFYCVDNLPVVLLPDLARTLADREISAAVSIDVRNMPESPEIFEQAMSNLPDAFSPQLLFLDADRNTLIRRYSDTRRLHPLSSKNLSLESAIDKESDLLEPLRSRADLIVDTSEMSVHELAEMLRTRLLGKRERELTMVFESFGFKHGIPIDADYVFDVRFLPNPHWDPKLRPMTGLDKPVAAFLDRHTEVHNFIYQTRSYLELWLPMLETNNRSYLTVAIGCTGGKHRSVYIAEQLADYFRSRGKNVQSRHRTLEKRKP.

8–15 (GRSGSGKS) serves as a coordination point for ATP. 56 to 59 (DVRN) contributes to the GTP binding site. The segment at 266-284 (RSRGKNVQSRHRTLEKRKP) is RNA-binding.

Belongs to the RapZ-like family. RapZ subfamily. In terms of assembly, homotrimer.

Modulates the synthesis of GlmS, by affecting the processing and stability of the regulatory small RNA GlmZ. When glucosamine-6-phosphate (GlcN6P) concentrations are high in the cell, RapZ binds GlmZ and targets it to cleavage by RNase E. Consequently, GlmZ is inactivated and unable to activate GlmS synthesis. Under low GlcN6P concentrations, RapZ is sequestered and inactivated by an other regulatory small RNA, GlmY, preventing GlmZ degradation and leading to synthesis of GlmS. The sequence is that of RNase adapter protein RapZ from Shigella boydii serotype 18 (strain CDC 3083-94 / BS512).